We begin with the raw amino-acid sequence, 137 residues long: Large ribosomal subunit protein uL16 (137 aa).

The protein belongs to the universal ribosomal protein uL16 family. As to quaternary structure, part of the 50S ribosomal subunit.

Its function is as follows. Binds 23S rRNA and is also seen to make contacts with the A and possibly P site tRNAs. This chain is Large ribosomal subunit protein uL16, found in Halorhodospira halophila (strain DSM 244 / SL1) (Ectothiorhodospira halophila (strain DSM 244 / SL1)).